We begin with the raw amino-acid sequence, 715 residues long: Polyribonucleotide nucleotidyltransferase (715 aa).

Mg(2+)-binding residues include Asp493 and Asp499. A KH domain is found at 560 to 619; sequence PRMITIKINPEKIRDVIGKGGSVIRALTEETGTTIDISDDGVVTIASTNSDGMAEAKKRI. The S1 motif domain maps to 629 to 697; the sequence is GQVYEGTVLK…EKGRVRLSAK (69 aa).

Belongs to the polyribonucleotide nucleotidyltransferase family. The cofactor is Mg(2+).

Its subcellular location is the cytoplasm. The catalysed reaction is RNA(n+1) + phosphate = RNA(n) + a ribonucleoside 5'-diphosphate. Involved in mRNA degradation. Catalyzes the phosphorolysis of single-stranded polyribonucleotides processively in the 3'- to 5'-direction. In Burkholderia lata (strain ATCC 17760 / DSM 23089 / LMG 22485 / NCIMB 9086 / R18194 / 383), this protein is Polyribonucleotide nucleotidyltransferase.